Consider the following 222-residue polypeptide: Niacin transporter NiaX (222 aa).

5 helical membrane passes run 34–54 (NLII…MMPV), 72–94 (MAAM…LGFM), 101–120 (TIWL…AYVL), 135–155 (IFNF…VYAF), and 167–187 (ALLN…MIDF).

It belongs to the vitamin uptake transporter (VUT/ECF) (TC 2.A.88) family. In terms of assembly, in L.lactis forms a stable complex with EcfA, EcfA' and EcfT. In E.coli forms a stable energy-coupling factor (ECF) transporter complex composed of 2 membrane-embedded substrate-binding proteins (S component), 2 ATP-binding proteins (A and A' components) and 2 transmembrane proteins (T component), probably with a stoichiometry of 2:1:1:2. May be able to interact with more than 1 S component at a time.

Its subcellular location is the cell membrane. Its function is as follows. Probably a niacin-binding protein that interacts with the energy-coupling factor (ECF) ABC-transporter complex. Unlike classic ABC transporters this ECF transporter provides the energy necessary to transport a number of different substrates. The substrates themselves are bound by transmembrane, not extracytoplasmic soluble proteins. Uptake of niacin into proteosomes containing EcfA1A2T and Niax has been demonstrated. Uptake requires hydrolyzable Mg-ATP and is substrate-specific; NiaX-containing proteosomes did not transport riboflavin. The sequence is that of Niacin transporter NiaX (niaX) from Lactococcus lactis subsp. cremoris (strain MG1363).